An 856-amino-acid chain; its full sequence is MNVIDTDDLEKHTPMMRQYLTMKAEHHDMLLFYRMGDFYELFYDDAKRASELLGISLTARGKSGGDPIPMAGLPYHAVEGYLAKLVQIGQSVAICEQIGDPATSKGPVERKVVRIVTPGTLTDEALLQERQDNLLAAVYQGKIGFGYATLDVSSGRFVIAELDTRESLEAELQRTNPVEILYSEDFGELGLLNGFKGKRRRPEWEFDYDTSIKLLLAQFGTKDLHGFGIADARLSLQAAGCLMQYVKDTQRTALPHINAITRFNQTDSIVLDAATRRNLELTQNLAGGRDNTLAAVLDNTATPMGSRMLQRWIHQPLRDPKHIKARQQAVTELLDTAAHEGLHEQLKALGDIERIMARLALRTARPRDFARLRQALGLLPELQQSLSTLSAPHTTQLRQHLGEFPAEQALLERAIVDNPPMLIRDGGVIREGYNSELDEWRGLSEGASDYLVQLEAREKERTGINTLKVGYNRVHGYYIEVSRLQSSQVPLNYQRRQTLKNMERYITPELKEYEEKVLSSQGKALALEKQLWEQLFDFILPKLHELQDFARAAAELDVLSNFAERAETLGYTCPELSQDIGVQIEAGRHPVVERVSQTPFIANPVTLHNQRRMLIVTGPNMGGKSTYMRQVALITLMAHIGCFVPADRALIGPIDRIFTRIGASDDLASGRSTFMVEMTETANILHNATASSLVLMDEIGRGTSTYDGLSLAWSAAEYLAQQVGAMTLFATHYFELTQLPELMAGVYNVHLDAIEHDDTIAFMHAVQEGAASKSYGLQVAALAGVPNKVIKAAKHKLQQLESRDHQAEGTRTPIQSLLALPEPVENPALTKLSSINPDNLTPKQALDLLYELKRLS.

618-625 (GPNMGGKS) is a binding site for ATP.

It belongs to the DNA mismatch repair MutS family.

Its function is as follows. This protein is involved in the repair of mismatches in DNA. It is possible that it carries out the mismatch recognition step. This protein has a weak ATPase activity. The chain is DNA mismatch repair protein MutS from Shewanella baltica (strain OS185).